Consider the following 943-residue polypeptide: Nuclear receptor coactivator 7 (943 aa).

Met1 is modified (N-acetylmethionine). Residues Met1–Gln15 are compositionally biased toward basic and acidic residues. Residues Met1–Glu32 are a coiled coil. A disordered region spans residues Met1 to Arg83. Phosphoserine is present on Ser92. The LysM domain maps to Met117 to Val160. Position 137 is a phosphothreonine (Thr137). The disordered stretch occupies residues Thr169 to Glu189. The segment covering Pro177 to Asp187 has biased composition (polar residues). 5 positions are modified to phosphoserine: Ser182, Ser186, Ser211, Ser212, and Ser214. Positions Glu334–Asp369 are disordered. A compositionally biased stretch (basic and acidic residues) spans Lys349–Asp369. 3 positions are modified to phosphoserine: Ser442, Ser498, and Ser500. A compositionally biased stretch (basic and acidic residues) spans Glu486–Gly499. 2 disordered regions span residues Glu486–Ser507 and Leu543–Pro576. In terms of domain architecture, TLDc spans Ala782–Glu943.

It belongs to the OXR1 family. In terms of assembly, interacts with ESR1, ESR2A, ESR2B, THRB, PPARG and RARA in a ligand-inducible manner. Interacts with the heterodimer AHR-ARNT. In terms of tissue distribution, highly expressed in brain and kidney. Weakly expressed in mammary gland, lung and testis. In brain, expression is found in neurons of cerebral cortex, thalamus, hypothalamus, hippocampus, cerebellum, striatum and choroid plexus.

It is found in the nucleus. Its function is as follows. Enhances the transcriptional activities of several nuclear receptors. Involved in the coactivation of different nuclear receptors, such as ESR1, THRB, PPARG and RARA. The protein is Nuclear receptor coactivator 7 (Ncoa7) of Mus musculus (Mouse).